Consider the following 475-residue polypeptide: Phosphoethanolamine N-methyltransferase 1 (475 aa).

Belongs to the class I-like SAM-binding methyltransferase superfamily.

The enzyme catalyses phosphoethanolamine + S-adenosyl-L-methionine = N-methylethanolamine phosphate + S-adenosyl-L-homocysteine + H(+). The protein operates within phospholipid metabolism; phosphatidylcholine biosynthesis; phosphocholine from phosphoethanolamine. With respect to regulation, feedback inhibition by phosphatidylcholine. In terms of biological role, catalyzes the first step in the synthesis of phosphocholine by converting phosphoethanolamine into phospho-monomethylethanolamine (N-methylethanolamine phosphate). Phosphocholine is a precursor for phosphatidylcholine, a major component in membranes and a precursor itself in the production of glycoconjugates secreted by parasitic nematodes to avoid host immune responses. The polypeptide is Phosphoethanolamine N-methyltransferase 1 (Caenorhabditis elegans).